A 197-amino-acid polypeptide reads, in one-letter code: Nucleoid occlusion factor SlmA (197 aa).

Residues 7-67 (INRREHILQC…GLIDFIEESL (61 aa)) form the HTH tetR-type domain. Residues 30–49 (TTAKLAAEVGVSEAALYRHF) constitute a DNA-binding region (H-T-H motif).

It belongs to the nucleoid occlusion factor SlmA family. Homodimer. Interacts with FtsZ.

It localises to the cytoplasm. It is found in the nucleoid. Required for nucleoid occlusion (NO) phenomenon, which prevents Z-ring formation and cell division over the nucleoid. Acts as a DNA-associated cell division inhibitor that binds simultaneously chromosomal DNA and FtsZ, and disrupts the assembly of FtsZ polymers. SlmA-DNA-binding sequences (SBS) are dispersed on non-Ter regions of the chromosome, preventing FtsZ polymerization at these regions. The polypeptide is Nucleoid occlusion factor SlmA (Shewanella woodyi (strain ATCC 51908 / MS32)).